A 263-amino-acid polypeptide reads, in one-letter code: Zinc finger protein STAMENLESS 1 (263 aa).

The interval methionine 1 to lysine 51 is disordered. Positions threonine 25–serine 40 are enriched in low complexity. The C2H2-type zinc-finger motif lies at tyrosine 58–histidine 80.

In terms of tissue distribution, expressed in leaf primordia, inflorescence meristem, rachis branch meristems, floral meristem and floral organ primordia.

It is found in the nucleus. In terms of biological role, regulates floral organ identity and cell proliferation in the inner floral whorls. Probably specifies the identities of lodicule and stamen through positive regulation of MADS16 expression. May contribute to morphogenesis by suppressing OSH1 expression in the lateral organs. This chain is Zinc finger protein STAMENLESS 1 (SL1), found in Oryza sativa subsp. japonica (Rice).